A 324-amino-acid polypeptide reads, in one-letter code: Probable WRKY transcription factor 53 (324 aa).

The tract at residues 93–126 is disordered; sequence NPGSVPESPASINGSPRSEEFADGGGSSESHHRQ. The segment at residues 152 to 220 is a DNA-binding region (WRKY); the sequence is GLEGPQDDVF…YRGTHTCSQA (69 aa).

The protein belongs to the WRKY group III family. As to quaternary structure, interacts with ESR/ESP and UPL5. Binds to WRKY30. In terms of processing, ubiquitinated by UPL5. Ubiquitination leads to its subsequent degradation, thus controlling the timing of leaf senescence.

The protein resides in the nucleus. Transcription factor. Interacts specifically with the W box (5'-(T)TGAC[CT]-3'), a frequently occurring elicitor-responsive cis-acting element. May regulate the early events of leaf senescence. Negatively regulates the expression of ESR/ESP. Together with WRKY46 and WRKY70, promotes resistance to P.syringae, probably by enhancing salicylic acid (SA)- dependent genes. Contributes to the suppression of jasmonic acid (MeJA)-induced expression of PDF1.2. The polypeptide is Probable WRKY transcription factor 53 (Arabidopsis thaliana (Mouse-ear cress)).